Here is a 235-residue protein sequence, read N- to C-terminus: Large ribosomal subunit protein uL1 (235 aa).

The protein belongs to the universal ribosomal protein uL1 family. In terms of assembly, part of the 50S ribosomal subunit.

Binds directly to 23S rRNA. The L1 stalk is quite mobile in the ribosome, and is involved in E site tRNA release. Functionally, protein L1 is also a translational repressor protein, it controls the translation of the L11 operon by binding to its mRNA. The chain is Large ribosomal subunit protein uL1 from Fervidobacterium nodosum (strain ATCC 35602 / DSM 5306 / Rt17-B1).